The following is a 204-amino-acid chain: UPF0637 protein LMHCC_1566 (204 aa).

This sequence belongs to the UPF0637 family.

This is UPF0637 protein LMHCC_1566 from Listeria monocytogenes serotype 4a (strain HCC23).